Here is a 227-residue protein sequence, read N- to C-terminus: Cytidylate kinase (227 aa).

An ATP-binding site is contributed by 7 to 15 (GPSGAGKGT).

It belongs to the cytidylate kinase family. Type 1 subfamily.

Its subcellular location is the cytoplasm. It catalyses the reaction CMP + ATP = CDP + ADP. It carries out the reaction dCMP + ATP = dCDP + ADP. The protein is Cytidylate kinase of Actinobacillus succinogenes (strain ATCC 55618 / DSM 22257 / CCUG 43843 / 130Z).